The chain runs to 528 residues: Protein arginine N-methyltransferase 3 (528 aa).

Residues 1–42 (MCSLAAGNGQGAELGPEPLELSDSGDDAGWEDEDADAEPAQG) are disordered. At cysteine 2 the chain carries N-acetylcysteine. Phosphoserine occurs at positions 22 and 24. A compositionally biased stretch (acidic residues) spans 23-37 (DSGDDAGWEDEDADA). The C2H2-type zinc finger occupies 46-69 (TPCLFCDRLFRSAEETFSHCKLEH). Serine 169 bears the Phosphoserine mark. Residues 184–528 (MKQFAQDFVM…NSSTQTYSLQ (345 aa)) are mediates interaction with ALDH1A1. The 315-residue stretch at 214–528 (DGVYFSSYGH…NSSTQTYSLQ (315 aa)) folds into the SAM-dependent MTase PRMT-type domain. The S-adenosyl-L-homocysteine site is built by arginine 236, glycine 260, aspartate 282, serine 284, isoleucine 310, and glutamate 311. Catalysis depends on residues glutamate 326 and glutamate 335.

Belongs to the class I-like SAM-binding methyltransferase superfamily. Protein arginine N-methyltransferase family. As to quaternary structure, monomer and homodimer. Interacts with EPB41L3 (via FERM domain); the interaction is direct and inhibits the protein-arginine N-methyltransferase activity of PRMT3. Interacts with the 40S ribosomal protein RPS2. Interacts with ALDH1A1; the interaction is direct, inhibits ALDH1A1 aldehyde dehydrogenase activity and is independent of the methyltransferase activity of PRMT3. Ubiquitously expressed.

The protein resides in the cytoplasm. It localises to the cytosol. The protein localises to the nucleus. It carries out the reaction L-arginyl-[protein] + S-adenosyl-L-methionine = N(omega)-methyl-L-arginyl-[protein] + S-adenosyl-L-homocysteine + H(+). The enzyme catalyses L-arginyl-[protein] + 2 S-adenosyl-L-methionine = N(omega),N(omega)-dimethyl-L-arginyl-[protein] + 2 S-adenosyl-L-homocysteine + 2 H(+). Its activity is regulated as follows. Inhibited by N-ethylmaleimide and high concentrations of zinc chloride. Functionally, protein-arginine N-methyltransferase that catalyzes both the monomethylation and asymmetric dimethylation of the guanidino nitrogens of arginine residues in target proteins, and therefore falls into the group of type I methyltransferases. Catalyzes the asymmetric arginine dimethylation at multiple sites in the Arg/Gly-rich region of small ribosomal subunit protein uS5/RPS2. Also appears to methylate other ribosomal proteins. May regulate retinoic acid synthesis and signaling by inhibiting ALDH1A1 retinal dehydrogenase activity. Contributes to methylation of histone H4 'Arg-3', a specific tag for epigenetic transcriptional activation. Promotes osteogenesis. This is Protein arginine N-methyltransferase 3 from Rattus norvegicus (Rat).